The sequence spans 314 residues: MASASSVSLMLLVAAAMASAASAQLSATFYDTSCPNALSTIKSAVTAAVNSEPRMGASLVRLHFHDCFVQGCDASVLLSGQEQNAGPNAGSLRGFNVVDNIKTQVEAICSQTVSCADILAVAARDSVVALGGPSWTVLLGRRDSTTANESQANTDLPAPSSSLAELIGNFSRKGLDVTDMVALSGAHTIGQAQCQNFRDRLYNETNIDSSFATALKANCPRPTGSGDSNLAPLDTTTPNAFDSAYYTNLLSNKGLLHSDQVLFNGGSTDNTVRNFSSNTAAFNSAFTVAMVKMGNISPLTGTQGQIRLNCSKVN.

The signal sequence occupies residues methionine 1–alanine 23. Glutamine 24 is modified (pyrrolidone carboxylic acid). 4 cysteine pairs are disulfide-bonded: cysteine 34–cysteine 109, cysteine 67–cysteine 72, cysteine 115–cysteine 310, and cysteine 194–cysteine 219. Residue histidine 65 is the Proton acceptor of the active site. Residues aspartate 66, valine 69, glycine 71, aspartate 73, and serine 75 each contribute to the Ca(2+) site. A glycan (N-linked (GlcNAc...) asparagine) is linked at asparagine 148. Proline 157 contributes to the substrate binding site. Asparagine 169 carries N-linked (GlcNAc...) asparagine glycosylation. Residue histidine 187 coordinates heme b. Threonine 188 contacts Ca(2+). Asparagine 203 carries N-linked (GlcNAc...) asparagine glycosylation. Ca(2+) contacts are provided by aspartate 234, threonine 237, and aspartate 242. Asparagine 274 and asparagine 309 each carry an N-linked (GlcNAc...) asparagine glycan.

It belongs to the peroxidase family. Classical plant (class III) peroxidase subfamily. Ca(2+) is required as a cofactor. Requires heme b as cofactor.

The protein resides in the secreted. The catalysed reaction is 2 a phenolic donor + H2O2 = 2 a phenolic radical donor + 2 H2O. In terms of biological role, removal of H(2)O(2), oxidation of toxic reductants, biosynthesis and degradation of lignin, suberization, auxin catabolism, response to environmental stresses such as wounding, pathogen attack and oxidative stress. These functions might be dependent on each isozyme/isoform in each plant tissue. The protein is Peroxidase 2 (PRX112) of Oryza sativa subsp. indica (Rice).